Consider the following 380-residue polypeptide: Cystathionine gamma-synthase (380 aa).

An N6-(pyridoxal phosphate)lysine modification is found at Lys195.

This sequence belongs to the trans-sulfuration enzymes family. As to quaternary structure, homotetramer. Pyridoxal 5'-phosphate is required as a cofactor.

It is found in the cytoplasm. The enzyme catalyses O-succinyl-L-homoserine + L-cysteine = L,L-cystathionine + succinate + H(+). Its function is as follows. Catalyzes the formation of L-cystathionine from O-succinyl-L-homoserine (OSHS) and L-cysteine, via a gamma-replacement reaction. In the absence of thiol, catalyzes gamma-elimination to form 2-oxobutanoate, succinate and ammonia. The sequence is that of Cystathionine gamma-synthase (metB) from Helicobacter pylori (strain ATCC 700392 / 26695) (Campylobacter pylori).